The sequence spans 571 residues: Septation ring formation regulator EzrA (571 aa).

Residues 1–3 (MYY) are Extracellular-facing. The helical transmembrane segment at 4-22 (MLIGFIIVVIAVISAGYIL) threads the bilayer. Topologically, residues 23-571 (KRKHYQRINE…ESKVSVDDIE (549 aa)) are cytoplasmic. Coiled coils occupy residues 170–215 (EAKL…QMER), 248–299 (LAQM…TLEH), 326–374 (DALA…ASGE), 400–437 (NFAE…ERER), and 478–529 (RIAE…ENHF).

The protein belongs to the EzrA family.

The protein localises to the cell membrane. Functionally, negative regulator of FtsZ ring formation; modulates the frequency and position of FtsZ ring formation. Inhibits FtsZ ring formation at polar sites. Interacts either with FtsZ or with one of its binding partners to promote depolymerization. The chain is Septation ring formation regulator EzrA from Listeria innocua serovar 6a (strain ATCC BAA-680 / CLIP 11262).